A 137-amino-acid chain; its full sequence is Small ribosomal subunit protein bS16 (137 aa).

Over residues 104–118 the composition is skewed to basic and acidic residues; that stretch reads ADEKKKPVLKPKTEK. Residues 104 to 137 are disordered; the sequence is ADEKKKPVLKPKTEKAAPAPEAAAPEAESTEEQA. Positions 119-130 are enriched in low complexity; it reads AAPAPEAAAPEA.

It belongs to the bacterial ribosomal protein bS16 family.

In Clavibacter michiganensis subsp. michiganensis (strain NCPPB 382), this protein is Small ribosomal subunit protein bS16.